We begin with the raw amino-acid sequence, 1033 residues long: Calcium-transporting ATPase 3, plasma membrane-type (1033 aa).

The Cytoplasmic portion of the chain corresponds to 1–180 (MHSGVNGCCP…FVWEALEDTT (180 aa)). A run of 2 helical transmembrane segments spans residues 181–201 (LIIL…TEGW) and 204–224 (GAHD…VTGT). At 225–268 (SNYQQSLQFRDLDKEKRKILVQVTRNGLRQRVLIDDLLPGDAVH) the chain is on the cytoplasmic side. Helical transmembrane passes span 269–289 (LAVG…SVLV) and 362–382 (IGKI…QGII). At 383–405 (GQKYLDGLLLSWSGDDVLEILDH) the chain is on the cytoplasmic side. The chain crosses the membrane as a helical span at residues 406–426 (FAVAVTIVVVAVPEGLPLAVT). Catalysis depends on D461, which acts as the 4-aspartylphosphate intermediate. D762 and D766 together coordinate Mg(2+). A helical membrane pass occupies residues 823–843 (FQLTVNVVALLVNFTSACFTG). Over 844-846 (DAP) the chain is Cytoplasmic. A run of 2 helical transmembrane segments spans residues 847 to 867 (LTAV…ALAL) and 928 to 948 (IVLN…NEIS). Residues 949-965 (SREMEDINVLRGMAGNS) lie on the Cytoplasmic side of the membrane. The next 2 helical transmembrane spans lie at 966–986 (IFLG…QFLG) and 999–1019 (WLIS…IKLI). Residues 1020–1033 (AVEPHEKADTRRTP) are Cytoplasmic-facing.

It belongs to the cation transport ATPase (P-type) (TC 3.A.3) family. Type IIB subfamily.

Its subcellular location is the membrane. It catalyses the reaction Ca(2+)(in) + ATP + H2O = Ca(2+)(out) + ADP + phosphate + H(+). With respect to regulation, activated by calmodulin. This magnesium-dependent enzyme catalyzes the hydrolysis of ATP coupled with the translocation of calcium from the cytosol out of the cell, into the endoplasmic reticulum, or into organelles. The polypeptide is Calcium-transporting ATPase 3, plasma membrane-type (Oryza sativa subsp. japonica (Rice)).